A 305-amino-acid polypeptide reads, in one-letter code: GMP synthase [glutamine-hydrolyzing] subunit B (305 aa).

The region spanning 2–184 (VDANAFIDEA…LPLPEEISER (183 aa)) is the GMPS ATP-PPase domain. Position 29–35 (29–35 (SGGVDSS)) interacts with ATP.

Heterodimer composed of a glutamine amidotransferase subunit (A) and a GMP-binding subunit (B).

It catalyses the reaction XMP + L-glutamine + ATP + H2O = GMP + L-glutamate + AMP + diphosphate + 2 H(+). The protein operates within purine metabolism; GMP biosynthesis; GMP from XMP (L-Gln route): step 1/1. Its function is as follows. Catalyzes the synthesis of GMP from XMP. In Methanocella arvoryzae (strain DSM 22066 / NBRC 105507 / MRE50), this protein is GMP synthase [glutamine-hydrolyzing] subunit B.